Here is a 448-residue protein sequence, read N- to C-terminus: Pentatricopeptide repeat-containing protein At1g80550, mitochondrial (448 aa).

The N-terminal 21 residues, 1–21, are a transit peptide targeting the mitochondrion; sequence MLLLRRLNRVRIASPYSVRLL. PPR repeat units follow at residues 80–110, 116–146, 150–186, 188–222, 223–257, 258–292, 293–327, 331–359, 360–394, and 395–429; these read TTET…MIGN, NHVT…LDDF, DETS…GFSV, NTKI…GVTK, DLFS…RMKL, DVVA…GCEP, NVAT…GCQP, TYMC…GVRP, KMDT…GDTP, and DSAA…GLSP.

This sequence belongs to the PPR family. P subfamily.

The protein localises to the mitochondrion. The chain is Pentatricopeptide repeat-containing protein At1g80550, mitochondrial from Arabidopsis thaliana (Mouse-ear cress).